The primary structure comprises 362 residues: Molybdenum import ATP-binding protein ModC (362 aa).

An ABC transporter domain is found at 2–236 (ASPIEVRLQM…LDLPLAMGSD (235 aa)). Residue 34–41 (GPSGSGKT) coordinates ATP. Residues 297 to 362 (QSSILNRLPV…AQIKAVAVLA (66 aa)) form the Mop domain.

The protein belongs to the ABC transporter superfamily. Molybdate importer (TC 3.A.1.8) family. In terms of assembly, the complex is composed of two ATP-binding proteins (ModC), two transmembrane proteins (ModB) and a solute-binding protein (ModA).

Its subcellular location is the cell inner membrane. It carries out the reaction molybdate(out) + ATP + H2O = molybdate(in) + ADP + phosphate + H(+). Its function is as follows. Part of the ABC transporter complex ModABC involved in molybdenum import. Responsible for energy coupling to the transport system. The sequence is that of Molybdenum import ATP-binding protein ModC from Pseudomonas syringae pv. syringae (strain B728a).